The chain runs to 338 residues: Lipoate-protein ligase A (338 aa).

The BPL/LPL catalytic domain occupies 29–216 (PATQRVLFLW…AFFAHYGERV (188 aa)). ATP is bound by residues R71, 76-79 (GAVF), and K134. Position 134 (K134) interacts with (R)-lipoate.

This sequence belongs to the LplA family. In terms of assembly, monomer.

The protein resides in the cytoplasm. It carries out the reaction L-lysyl-[lipoyl-carrier protein] + (R)-lipoate + ATP = N(6)-[(R)-lipoyl]-L-lysyl-[lipoyl-carrier protein] + AMP + diphosphate + H(+). Its pathway is protein modification; protein lipoylation via exogenous pathway; protein N(6)-(lipoyl)lysine from lipoate: step 1/2. It functions in the pathway protein modification; protein lipoylation via exogenous pathway; protein N(6)-(lipoyl)lysine from lipoate: step 2/2. In terms of biological role, catalyzes both the ATP-dependent activation of exogenously supplied lipoate to lipoyl-AMP and the transfer of the activated lipoyl onto the lipoyl domains of lipoate-dependent enzymes. This Escherichia coli O157:H7 protein is Lipoate-protein ligase A.